The sequence spans 706 residues: mRNA (2'-O-methyladenosine-N(6)-)-methyltransferase (706 aa).

Residues 1–34 (MANENHGSPREGASLLSHSPGTSSQSQPCSPKPV) are disordered. Polar residues predominate over residues 16–29 (LSHSPGTSSQSQPC). The residue at position 30 (Ser30) is a Phosphoserine. The WW domain occupies 43–77 (ELVHAGWEKCWSRRESRPYYFNRFTNQSLWEMPVL). The interval 88-148 (GLNATPLPQD…QSVPSSPSIP (61 aa)) is disordered. Residues 109–113 (KSRKR) carry the Nuclear localization signal motif. Ser116 carries the phosphoserine modification. Over residues 132 to 147 (IPVTPTSQSVPSSPSI) the composition is skewed to low complexity. Position 152 is a phosphothreonine (Thr152). The substrate site is built by Arg234 and Arg264. An S-adenosyl-L-methionine-binding site is contributed by 552 to 555 (NPPF). Residues Glu557 and 587 to 591 (WREPP) contribute to the substrate site. 613–615 (FEH) contributes to the S-adenosyl-L-methionine binding site. A disordered region spans residues 663-706 (TAAYKQSGRSHGSSSSSSSSSSSSEAKDRDSGREQGPSREPHPT). A Nuclear localization signal motif is present at residues 668–686 (QSGRSHGSSSSSSSSSSSS). The segment covering 675–686 (SSSSSSSSSSSS) has biased composition (low complexity). Residues 687 to 706 (EAKDRDSGREQGPSREPHPT) are compositionally biased toward basic and acidic residues.

The protein belongs to the CAPAM family. Interacts with POLR2A; interacts with the phosphorylated C-terminal domain (CTD) of POLR2A.

It is found in the nucleus. The enzyme catalyses a 5'-end (N(7)-methyl 5'-triphosphoguanosine)-(2'-O-methyladenosine) in mRNA + S-adenosyl-L-methionine = a 5'-end (N(7)-methyl 5'-triphosphoguanosine)-(N(6),2'-O-dimethyladenosine) in mRNA + S-adenosyl-L-homocysteine + H(+). Cap-specific adenosine methyltransferase activity is inhibited by zinc. Its function is as follows. Cap-specific adenosine methyltransferase that catalyzes formation of N(6),2'-O-dimethyladenosine cap (m6A(m)) by methylating the adenosine at the second transcribed position of capped mRNAs. Recruited to the early elongation complex of RNA polymerase II (RNAPII) via interaction with POLR2A and mediates formation of m6A(m) co-transcriptionally. The polypeptide is mRNA (2'-O-methyladenosine-N(6)-)-methyltransferase (Mus musculus (Mouse)).